The sequence spans 622 residues: uncharacterized protein (622 aa).

The span at 157 to 166 (LKESPLRDQQ) shows a compositional bias: basic and acidic residues. Positions 157-238 (LKESPLRDQQ…GLPDHNSISE (82 aa)) are disordered.

This is an uncharacterized protein from Homo sapiens (Human).